The sequence spans 606 residues: MNKKYGTSSNNHDNKKDKKNNADKNKNKKNTTTGEENKDSNKSLVNNDSKKNDSSKNKYNIVKANIKNIFASDKKNEKSDKNEKNESSKSSKNTETYTNVNDKKSNNLITKGSNDKKKKKKDSKKNSSNNNNNNTIVDISDGDYTNDEEGTNKPKRNWKGRTFSRFTPGGVRSSTVLFICTAIGVGFLSIPYVFSKLGIILSIILIILNAFESYVTTNILCTSSLEHNTFVYGNLLKKIGNKYYKTIIDFGLSFGFVSSYILILILISNFLSTIFYVFNFPTLFTNNVFLVILICLLILPITFRNKVGSLNHFLIFSLFSLSITVLTIGLQTKSYNNLLINKEVNLFKMDKHFFKCFNILLFSFSQQPNACFITGQFNQPTHRRLNKSTFRSVILQVIFYTLFGILGYFSFLNTAKDNIVLNYENSNVSILLCKFLLSLTFFFSVPLNFMGSYQSMLALGITTRDALYKLYTYIFRRTGYSANLSLLLSEYTNDPYQETHADNITEHSSVSESQTDDQNQRMWISVIVTIFCALIACKVKKLSNVIGIGGGITSTLISCLLPNLIYYKNRHNVSNKLKRYSTLFMLCFFSFMGFLSVVVTTLNLIL.

The disordered stretch occupies residues 1–156; it reads MNKKYGTSSN…DEEGTNKPKR (156 aa). Basic and acidic residues-rich tracts occupy residues 12–25 and 72–89; these read HDNK…ADKN and SDKK…ESSK. The segment covering 140-149 has biased composition (acidic residues); it reads SDGDYTNDEE. 11 consecutive transmembrane segments (helical) span residues 175–194, 200–225, 246–271, 283–301, 313–332, 352–372, 393–412, 428–449, 522–539, 545–567, and 579–605; these read TVLF…PYVF, ILSI…TSSL, TIID…SNFL, LFTN…ILPI, FLIF…GLQT, HFFK…NACF, VILQ…FSFL, VSIL…PLNF, MWIS…ACKV, VIGI…LIYY, and RYST…LNLI.

Belongs to the amino acid/polyamine transporter 2 family.

Its subcellular location is the vacuole membrane. Putative amino acid transporter. Probably transports tryptophan. Involved in maintaining the osmotic homeostasis of the digestive vacuole. Important for the timely development and growth of the asexual-stage parasites and male gametocyte maturation. This is Putative amino acid transporter AAT1 from Plasmodium falciparum (isolate 3D7).